Consider the following 158-residue polypeptide: Large ribosomal subunit protein mL50 (158 aa).

This sequence belongs to the mitochondrion-specific ribosomal protein mL50 family. In terms of assembly, component of the mitochondrial large ribosomal subunit (mt-LSU). Mature mammalian 55S mitochondrial ribosomes consist of a small (28S) and a large (39S) subunit. The 28S small subunit contains a 12S ribosomal RNA (12S mt-rRNA) and 30 different proteins. The 39S large subunit contains a 16S rRNA (16S mt-rRNA), a copy of mitochondrial valine transfer RNA (mt-tRNA(Val)), which plays an integral structural role, and 52 different proteins.

Its subcellular location is the mitochondrion. In Homo sapiens (Human), this protein is Large ribosomal subunit protein mL50 (MRPL50).